The sequence spans 124 residues: Fluoride-specific ion channel FluC (124 aa).

3 helical membrane passes run 5–27 (LFVA…FMLQ), 70–90 (VGLL…LLLI), and 95–115 (WIKA…MVYL). Positions 74 and 77 each coordinate Na(+).

It belongs to the fluoride channel Fluc/FEX (TC 1.A.43) family.

The protein localises to the cell inner membrane. It catalyses the reaction fluoride(in) = fluoride(out). Na(+) is not transported, but it plays an essential structural role and its presence is essential for fluoride channel function. Its function is as follows. Fluoride-specific ion channel. Important for reducing fluoride concentration in the cell, thus reducing its toxicity. This is Fluoride-specific ion channel FluC from Shewanella sediminis (strain HAW-EB3).